A 2094-amino-acid polypeptide reads, in one-letter code: Non-reducing polyketide synthase ustP (2094 aa).

Positions 9-243 are N-terminal acylcarrier protein transacylase (SAT) domain; it reads VFGDLSVPYH…GKIQVGGLFH (235 aa). Positions 357-377 are disordered; the sequence is NTAGVDSSSRGSGHADAEKQP. The 435-residue stretch at 379–813 folds into the Ketosynthase family 3 (KS3) domain; sequence RSKIAIIGFS…GGNSSVLVED (435 aa). Residues C551, H686, and H727 each act as for beta-ketoacyl synthase activity in the active site. Positions 914 to 1227 are malonyl-CoA:ACP transacylase (MAT) domain; the sequence is FSFTGQGSQY…EDDCKIFTPA (314 aa). The active-site For acyl/malonyl transferase activity is the S1004. Residues 1305–1629 are product template (PT) domain; that stretch reads TTSVQYITAE…QRKVLDLVLP (325 aa). The tract at residues 1308 to 1445 is N-terminal hotdog fold; sequence VQYITAESYG…CSGFFTDKSR (138 aa). A PKS/mFAS DH domain is found at 1308-1625; it reads VQYITAESYG…FAAVQRKVLD (318 aa). The active-site Proton acceptor; for dehydratase activity is the H1341. Residues 1473-1625 are C-terminal hotdog fold; the sequence is GSVHMIKTGM…FAAVQRKVLD (153 aa). D1536 functions as the Proton donor; for dehydratase activity in the catalytic mechanism. Over residues 1644–1671 the composition is skewed to low complexity; sequence AAAAPSQRQQQQQQQQQQQPAQPVAASQ. The disordered stretch occupies residues 1644-1689; sequence AAAAPSQRQQQQQQQQQQQPAQPVAASQESGMDDMPPTLVPSEKKD. The Carrier domain maps to 1689–1763; sequence DVPSEKLKVI…ELVRHILGSS (75 aa). S1723 carries the post-translational modification O-(pantetheine 4'-phosphoryl)serine. The segment covering 1762 to 1778 has biased composition (polar residues); the sequence is SSTPSSDSGPATPSITP. The segment at 1762 to 1782 is disordered; it reads SSTPSSDSGPATPSITPLQEP. Residues 1844-2069 form a claisen cyclase domain region; it reads KVWLFPDGSG…GVVEGAHHFS (226 aa). S1916 acts as the For Claisen cyclase activity in catalysis.

The catalysed reaction is 6 malonyl-CoA + acetyl-CoA + 6 H(+) = naphtopyrone YWA1 + 6 CO2 + 7 CoA + H2O. The protein operates within secondary metabolite biosynthesis. Non-reducing polyketide synthase; part of the gene cluster that mediates the biosynthesis of ustilaginoidins, dimeric gamma-naphthopyrones isolated from different fungal species. The first step in the biosynthesis of ustilaginoidins is the production of gamma-naphthopyrone precursor YWA1 by the non-reducing polyketide synthase ustP, via condensation of one acetyl-CoA starter unit with 6 malonyl-CoA units. YWA1 is then probably substrate of the ustZ to yield norrubrofusarin via a dehydration reaction. A key enzyme in the biosynthetic pathway is the laccase ustL, which catalyzes the oxidative dimerization of norrubrofusarin to ustilaginoidin A. It can produce the M- and P-atropisomers in varying amounts, depending on the reaction conditions. For the biosynthesis of 3-methylustilaginoid in derivatives such as chaetochromin A, a methylated derivative of YWA1 is required. The C-methylation is considered to be catalyzed by ustM, the phosphopantetheine attachment site of which indicates that it acts on the growing polyketide chain before release of the product. For the biosynthesis of chaetochromin A, it is assumed that saturation of the D2 double bond takes place before dimerization, and is probably catalyzed by an external reductase because no candidate gene was identified within the cluster. This chain is Non-reducing polyketide synthase ustP, found in Ustilaginoidea virens (Rice false smut fungus).